We begin with the raw amino-acid sequence, 402 residues long: 1-deoxy-D-xylulose 5-phosphate reductoisomerase (402 aa).

Threonine 13, glycine 14, serine 15, isoleucine 16, and asparagine 126 together coordinate NADPH. 1-deoxy-D-xylulose 5-phosphate is bound at residue lysine 127. Glutamate 128 is a binding site for NADPH. Aspartate 152 is a binding site for Mn(2+). Residues serine 153, glutamate 154, serine 188, and histidine 211 each coordinate 1-deoxy-D-xylulose 5-phosphate. Glutamate 154 serves as a coordination point for Mn(2+). Residue glycine 217 coordinates NADPH. Residues serine 224, asparagine 229, lysine 230, and glutamate 233 each coordinate 1-deoxy-D-xylulose 5-phosphate. Glutamate 233 provides a ligand contact to Mn(2+).

This sequence belongs to the DXR family. The cofactor is Mg(2+). Mn(2+) serves as cofactor.

The enzyme catalyses 2-C-methyl-D-erythritol 4-phosphate + NADP(+) = 1-deoxy-D-xylulose 5-phosphate + NADPH + H(+). The protein operates within isoprenoid biosynthesis; isopentenyl diphosphate biosynthesis via DXP pathway; isopentenyl diphosphate from 1-deoxy-D-xylulose 5-phosphate: step 1/6. Its function is as follows. Catalyzes the NADPH-dependent rearrangement and reduction of 1-deoxy-D-xylulose-5-phosphate (DXP) to 2-C-methyl-D-erythritol 4-phosphate (MEP). This Psychrobacter cryohalolentis (strain ATCC BAA-1226 / DSM 17306 / VKM B-2378 / K5) protein is 1-deoxy-D-xylulose 5-phosphate reductoisomerase.